We begin with the raw amino-acid sequence, 210 residues long: Ribosomal RNA small subunit methyltransferase G (210 aa).

S-adenosyl-L-methionine-binding positions include glycine 76, leucine 81, 127-128, and arginine 142; that span reads VE.

Belongs to the methyltransferase superfamily. RNA methyltransferase RsmG family.

It is found in the cytoplasm. The enzyme catalyses guanosine(527) in 16S rRNA + S-adenosyl-L-methionine = N(7)-methylguanosine(527) in 16S rRNA + S-adenosyl-L-homocysteine. Specifically methylates the N7 position of guanine in position 527 of 16S rRNA. This chain is Ribosomal RNA small subunit methyltransferase G, found in Vibrio cholerae serotype O1 (strain ATCC 39541 / Classical Ogawa 395 / O395).